The chain runs to 396 residues: Elongation factor Tu (396 aa).

In terms of domain architecture, tr-type G spans 10 to 206 (KPHVNVGTIG…ALDTYIPTPE (197 aa)). Residues 19-26 (GHVDHGKT) are G1. A GTP-binding site is contributed by 19–26 (GHVDHGKT). Position 26 (threonine 26) interacts with Mg(2+). A G2 region spans residues 60 to 64 (GITIN). Residues 81–84 (DCPG) are G3. GTP is bound by residues 81-85 (DCPGH) and 136-139 (NKCD). The G4 stretch occupies residues 136-139 (NKCD). The G5 stretch occupies residues 174–176 (SAK).

This sequence belongs to the TRAFAC class translation factor GTPase superfamily. Classic translation factor GTPase family. EF-Tu/EF-1A subfamily. In terms of assembly, monomer.

It localises to the cytoplasm. It carries out the reaction GTP + H2O = GDP + phosphate + H(+). GTP hydrolase that promotes the GTP-dependent binding of aminoacyl-tRNA to the A-site of ribosomes during protein biosynthesis. The chain is Elongation factor Tu from Paraburkholderia xenovorans (strain LB400).